Consider the following 249-residue polypeptide: Adapter protein MecA (249 aa).

It belongs to the MecA family. As to quaternary structure, homodimer.

Functionally, enables the recognition and targeting of unfolded and aggregated proteins to the ClpC protease or to other proteins involved in proteolysis. This Streptococcus thermophilus (strain ATCC BAA-491 / LMD-9) protein is Adapter protein MecA.